The primary structure comprises 433 residues: Xylose isomerase (433 aa).

Residues histidine 99 and aspartate 102 contribute to the active site. Mg(2+) is bound by residues glutamate 230, glutamate 266, histidine 269, aspartate 294, aspartate 305, aspartate 307, and aspartate 337.

It belongs to the xylose isomerase family. Homotetramer. The cofactor is Mg(2+).

It is found in the cytoplasm. The enzyme catalyses alpha-D-xylose = alpha-D-xylulofuranose. This is Xylose isomerase from Roseobacter denitrificans (strain ATCC 33942 / OCh 114) (Erythrobacter sp. (strain OCh 114)).